Consider the following 289-residue polypeptide: Polyamine aminopropyltransferase (289 aa).

A PABS domain is found at 5–238; it reads TVWHETLHDQ…GIMTFAWATD (234 aa). Glutamine 33 provides a ligand contact to S-methyl-5'-thioadenosine. Residues histidine 64 and aspartate 88 each coordinate spermidine. S-methyl-5'-thioadenosine contacts are provided by residues glutamate 108 and 140–141; that span reads DG. Residue aspartate 158 is the Proton acceptor of the active site. Spermidine is bound at residue 158–161; sequence DCTD. Proline 165 contacts S-methyl-5'-thioadenosine.

This sequence belongs to the spermidine/spermine synthase family. In terms of assembly, homodimer or homotetramer.

The protein localises to the cytoplasm. The catalysed reaction is S-adenosyl 3-(methylsulfanyl)propylamine + putrescine = S-methyl-5'-thioadenosine + spermidine + H(+). It functions in the pathway amine and polyamine biosynthesis; spermidine biosynthesis; spermidine from putrescine: step 1/1. In terms of biological role, catalyzes the irreversible transfer of a propylamine group from the amino donor S-adenosylmethioninamine (decarboxy-AdoMet) to putrescine (1,4-diaminobutane) to yield spermidine. This Enterobacter sp. (strain 638) protein is Polyamine aminopropyltransferase.